Consider the following 277-residue polypeptide: 2-dehydro-3-deoxyphosphooctonate aldolase (277 aa).

Belongs to the KdsA family.

Its subcellular location is the cytoplasm. It catalyses the reaction D-arabinose 5-phosphate + phosphoenolpyruvate + H2O = 3-deoxy-alpha-D-manno-2-octulosonate-8-phosphate + phosphate. Its pathway is carbohydrate biosynthesis; 3-deoxy-D-manno-octulosonate biosynthesis; 3-deoxy-D-manno-octulosonate from D-ribulose 5-phosphate: step 2/3. It participates in bacterial outer membrane biogenesis; lipopolysaccharide biosynthesis. The protein is 2-dehydro-3-deoxyphosphooctonate aldolase of Brucella abortus (strain S19).